Reading from the N-terminus, the 351-residue chain is N-formyl peptide receptor 2 (351 aa).

Residues 1 to 27 (METNFSTPLNEYEEVSYESAGYTVLRI) lie on the Extracellular side of the membrane. Asn-4 carries an N-linked (GlcNAc...) asparagine glycan. Residues 28–50 (LPLVVLGVTFVLGVLGNGLVIWV) traverse the membrane as a helical segment. Residues 51-61 (AGFRMTRTVTT) are Cytoplasmic-facing. A helical membrane pass occupies residues 62-83 (ICYLNLALADFSFTATLPFLIV). At 84–100 (SMAMGEKWPFGWFLCKL) the chain is on the extracellular side. Residues Cys-98 and Cys-176 are joined by a disulfide bond. A helical transmembrane segment spans residues 101–121 (IHIVVDINLFGSVFLIGFIAL). Topologically, residues 122–140 (DRCICVLHPVWAQNHRTVS) are cytoplasmic. Residues 141–162 (LAMKVIVGPWILALVLTLPVFL) form a helical membrane-spanning segment. The Extracellular segment spans residues 163–205 (FLTTVTIPNGDTYCTFNFASWGGTPEERLKVAITMLTARGIIR). Residues 206–226 (FVIGFSLPMSIVAICYGLIAA) form a helical membrane-spanning segment. Residues 227 to 242 (KIHKKGMIKSSRPLRV) lie on the Cytoplasmic side of the membrane. The helical transmembrane segment at 243-266 (LTAVVASFFICWFPFQLVALLGTV) threads the bilayer. Residues 267–286 (WLKEMLFYGKYKIIDILVNP) lie on the Extracellular side of the membrane. The chain crosses the membrane as a helical span at residues 287–306 (TSSLAFFNSCLNPMLYVFVG). Topologically, residues 307 to 351 (QDFRERLIHSLPTSLERALSEDSAPTNDTAANSASPPAETELQAM) are cytoplasmic. Positions 325-351 (LSEDSAPTNDTAANSASPPAETELQAM) are disordered. Polar residues predominate over residues 329-341 (SAPTNDTAANSAS).

It belongs to the G-protein coupled receptor 1 family. As to quaternary structure, interacts with Amyloid-beta protein 42, product of APP; the interaction takes place at the cell surface and the complex is then rapidly internalized. (Microbial infection) Interacts with Staphylococcus aureus protein SSL13; this interaction leads to the activation of neutrophils. As to expression, detected in lung, bone marrow, neutrophils, spleen and testis.

It is found in the cell membrane. Its function is as follows. Low affinity receptor for N-formyl-methionyl peptides, which are powerful neutrophil chemotactic factors. Binding of FMLP to the receptor causes activation of neutrophils. This response is mediated via a G-protein that activates a phosphatidylinositol-calcium second messenger system. The activation of LXA4R could result in an anti-inflammatory outcome counteracting the actions of pro-inflammatory signals such as LTB4 (leukotriene B4). Receptor for the chemokine-like protein FAM19A5, mediating FAM19A5-stimulated macrophage chemotaxis and the inhibitory effect on TNFSF11/RANKL-induced osteoclast differentiation. Acts as a receptor for humanin. This chain is N-formyl peptide receptor 2 (FPR2), found in Homo sapiens (Human).